A 442-amino-acid polypeptide reads, in one-letter code: Phosphatidylserine synthase 2 (442 aa).

Topologically, residues 1 to 40 (MRRGERRGPAGPLGDGPALGLRRSTESEVYDDGTNTFFWR) are cytoplasmic. A helical membrane pass occupies residues 41-61 (AHTLTVLFILTCALGYVTLLE). Residues 62 to 74 (ETPQDTAYNTKRG) lie on the Lumenal side of the membrane. A helical transmembrane segment spans residues 75-95 (IVASILVFLCFGVTQAKDGPF). Over 96 to 104 (SRPHPAYWR) the chain is Cytoplasmic. The chain crosses the membrane as a helical span at residues 105–125 (FWLCVSVVYELFLIFILFQTV). The Lumenal segment spans residues 126–291 (QDGRQFMKYI…EWKPASSLRR (166 aa)). Residues N159 and N215 are each glycosylated (N-linked (GlcNAc...) asparagine). A helical transmembrane segment spans residues 292 to 312 (WLAVCGIIFVFLLAELNTFYL). A topological domain (cytoplasmic) is located at residue K313. A helical membrane pass occupies residues 314-334 (FVLWMPPEHYLVLLRLVFFVN). At 335-354 (VGGVAMREIYDFMDDPKFHK) the chain is on the lumenal side. Residues 355–375 (KLGQQAWLVAAITATEFLIVV) form a helical membrane-spanning segment. Residues 376–381 (KYDPYT) lie on the Cytoplasmic side of the membrane. A helical membrane pass occupies residues 382–402 (LTLSLPFYITQCWILGIILVL). Topologically, residues 403-442 (TWTAWRFFIRDITLRYKEIRRQKQEHKYEKDKCLSNGDGH) are lumenal.

The protein belongs to the phosphatidyl serine synthase family.

It localises to the endoplasmic reticulum membrane. It carries out the reaction a 1,2-diacyl-sn-glycero-3-phosphoethanolamine + L-serine = a 1,2-diacyl-sn-glycero-3-phospho-L-serine + ethanolamine. The catalysed reaction is 1-hexadecanoyl-2-(9Z-octadecenoyl)-sn-glycero-3-phosphoethanolamine + L-serine = 1-hexadecanoyl-2-(9Z-octadecenoyl)-sn-glycero-3-phospho-L-serine + ethanolamine. It catalyses the reaction 1-hexadecanoyl-2-(4Z,7Z,10Z,13Z,16Z,19Z-docosahexaenoyl)-sn-glycero-3-phosphoethanolamine + L-serine = 1-hexadecanoyl-2-(4Z,7Z,10Z,13Z,16Z,19Z-docosahexaenoyl)-sn-glycero-3-phosphoserine + ethanolamine. The enzyme catalyses 1-octadecanoyl-2-(5Z,8Z,11Z,14Z)-eicosatetraenoyl-sn-glycero-3-phosphoethanolamine + L-serine = 1-octadecanoyl-2-(5Z,8Z,11Z,14Z)-eicosatetraenoyl-sn-glycero-3-phosphoserine + ethanolamine. It carries out the reaction 1-octadecanoyl-2-(4Z,7Z,10Z,13Z,16Z,19Z-docosahexaenoyl)-sn-glycero-3-phosphoethanolamine + L-serine = 1-octadecanoyl-2-(4Z,7Z,10Z,13Z,16Z,19Z-docosahexaenoyl)-sn-glycero-3-phosphoserine + ethanolamine. The catalysed reaction is 1-(1Z-octadecenyl)-2-(4Z,7Z,10Z,13Z,16Z,19Z-docosahexaenoyl)-sn-glycero-3-phosphoethanolamine + L-serine = 1-(1Z-octadecenyl)-2-(4Z,7Z,10Z,13Z,16Z,19Z-docosahexaenoyl)-sn-glycero-3-phospho-L-serine + ethanolamine. It catalyses the reaction 1-octadecanoyl-2-(9Z-octadecenoyl)-sn-glycero-3-phosphoethanolamine + L-serine = 1-octadecanoyl-2-(9Z-octadecenoyl)-sn-glycero-3-phospho-L-serine + ethanolamine. The enzyme catalyses 1-(1Z-octadecenyl)-2-(9Z-octadecenoyl)-sn-glycero-3-phosphoethanolamine + L-serine = 1-(1Z-octadecenyl)-2-(9Z-octadecenoyl)-sn-glycero-3-phospho-L-serine + ethanolamine. It carries out the reaction 1-(1Z-octadecenyl)-2-(5Z,8Z,11Z,14Z- eicosatetraenoyl)-sn-glycero-3-phosphoethanolamine + L-serine = 1-(1Z-octadecenyl)-2-(5Z,8Z,11Z,14Z-eicosatetraenoyl)-sn-glycero-3-phospho-L-serine + ethanolamine. Its pathway is phospholipid metabolism; phosphatidylserine biosynthesis. Functionally, catalyzes a base-exchange reaction in which the polar head group of phosphatidylethanolamine (PE) or phosphatidylcholine (PC) is replaced by L-serine. Catalyzes the conversion of phosphatatidylethanolamine and does not act on phosphatidylcholine. Can utilize both phosphatidylethanolamine (PE) plasmalogen and diacyl PE as substrate and the latter is six times better utilized, indicating the importance of an ester linkage at the sn-1 position. Although it shows no sn-1 fatty acyl preference, exhibits significant preference towards docosahexaenoic acid (22:6n-3) compared with 18:1 or 20:4 at the sn-2 position. The protein is Phosphatidylserine synthase 2 (PTDSS1) of Gallus gallus (Chicken).